The primary structure comprises 1394 residues: DNA-directed RNA polymerase subunit beta' (1394 aa).

Positions 71, 73, 86, and 89 each coordinate Zn(2+). 3 residues coordinate Mg(2+): aspartate 462, aspartate 464, and aspartate 466. Zn(2+) is bound by residues cysteine 810, cysteine 884, cysteine 891, and cysteine 894.

This sequence belongs to the RNA polymerase beta' chain family. In terms of assembly, the RNAP catalytic core consists of 2 alpha, 1 beta, 1 beta' and 1 omega subunit. When a sigma factor is associated with the core the holoenzyme is formed, which can initiate transcription. Mg(2+) serves as cofactor. Requires Zn(2+) as cofactor.

The enzyme catalyses RNA(n) + a ribonucleoside 5'-triphosphate = RNA(n+1) + diphosphate. In terms of biological role, DNA-dependent RNA polymerase catalyzes the transcription of DNA into RNA using the four ribonucleoside triphosphates as substrates. The protein is DNA-directed RNA polymerase subunit beta' of Caulobacter sp. (strain K31).